The primary structure comprises 132 residues: Small ribosomal subunit protein uS8 (132 aa).

This sequence belongs to the universal ribosomal protein uS8 family. As to quaternary structure, part of the 30S ribosomal subunit. Contacts proteins S5 and S12.

Its function is as follows. One of the primary rRNA binding proteins, it binds directly to 16S rRNA central domain where it helps coordinate assembly of the platform of the 30S subunit. The protein is Small ribosomal subunit protein uS8 of Leptospira biflexa serovar Patoc (strain Patoc 1 / Ames).